The sequence spans 339 residues: DNA-directed RNA polymerase subunit alpha (339 aa).

The segment at methionine 1–glutamate 235 is alpha N-terminal domain (alpha-NTD). Positions phenylalanine 251–tyrosine 339 are alpha C-terminal domain (alpha-CTD).

It belongs to the RNA polymerase alpha chain family. As to quaternary structure, homodimer. The RNAP catalytic core consists of 2 alpha, 1 beta, 1 beta' and 1 omega subunit. When a sigma factor is associated with the core the holoenzyme is formed, which can initiate transcription.

The catalysed reaction is RNA(n) + a ribonucleoside 5'-triphosphate = RNA(n+1) + diphosphate. Its function is as follows. DNA-dependent RNA polymerase catalyzes the transcription of DNA into RNA using the four ribonucleoside triphosphates as substrates. This is DNA-directed RNA polymerase subunit alpha from Nitrobacter winogradskyi (strain ATCC 25391 / DSM 10237 / CIP 104748 / NCIMB 11846 / Nb-255).